The chain runs to 96 residues: Ribonuclease P protein component 1 (96 aa).

This sequence belongs to the eukaryotic/archaeal RNase P protein component 1 family. Consists of a catalytic RNA component and at least 5 protein subunits.

The protein localises to the cytoplasm. The catalysed reaction is Endonucleolytic cleavage of RNA, removing 5'-extranucleotides from tRNA precursor.. Part of ribonuclease P, a protein complex that generates mature tRNA molecules by cleaving their 5'-ends. The protein is Ribonuclease P protein component 1 of Methanococcus maripaludis (strain DSM 14266 / JCM 13030 / NBRC 101832 / S2 / LL).